Consider the following 210-residue polypeptide: Large ribosomal subunit protein uL4 (210 aa).

The span at 47–64 shows a compositional bias: polar residues; that stretch reads SRQGTRSQKSRSEVSGSN. The disordered stretch occupies residues 47–83; it reads SRQGTRSQKSRSEVSGSNKKPWRQKGTGRARSGSVKS.

The protein belongs to the universal ribosomal protein uL4 family. In terms of assembly, part of the 50S ribosomal subunit.

One of the primary rRNA binding proteins, this protein initially binds near the 5'-end of the 23S rRNA. It is important during the early stages of 50S assembly. It makes multiple contacts with different domains of the 23S rRNA in the assembled 50S subunit and ribosome. Its function is as follows. Forms part of the polypeptide exit tunnel. This chain is Large ribosomal subunit protein uL4, found in Blochmanniella pennsylvanica (strain BPEN).